Consider the following 1050-residue polypeptide: Antibiotic efflux pump membrane transporter ArpB (1050 aa).

12 helical membrane passes run 10–30 (IFAW…ILKL), 339–359 (GVIH…YLFL), 370–390 (MTVP…GFSI), 393–413 (LTMF…IVVV), 440–460 (GALV…AFFG), 472–492 (ITIV…TPAL), 539–559 (VPFL…FARI), 871–891 (MPAL…ALYE), 893–913 (WSIP…ALIA), 923–943 (VYFL…AILI), 972–992 (IIMT…ASGA), and 1004–1024 (VIGG…LFFV).

This sequence belongs to the resistance-nodulation-cell division (RND) (TC 2.A.6) family.

The protein resides in the cell inner membrane. The inner membrane transporter component of an antibiotic efflux pump. Confers resistance to numerous structurally unrelated antibiotics such as carbenicillin, chloramphenicol, erythromycin, novobiocin, streptomycin and tetracycline. Is not involved in organic solvent efflux. In Pseudomonas putida (Arthrobacter siderocapsulatus), this protein is Antibiotic efflux pump membrane transporter ArpB (arpB).